The sequence spans 346 residues: Cell division protein FtsZ 2 (346 aa).

GTP contacts are provided by residues 23-27, 110-112, E141, R145, and D189; these read GGGGN and GTG. A disordered region spans residues 320–346; the sequence is SNRSAQPTAPEAMNGQTAAAVPSRTLQ.

It belongs to the FtsZ family. Homodimer. Polymerizes to form a dynamic ring structure in a strictly GTP-dependent manner. Interacts directly with several other division proteins.

It localises to the cytoplasm. Functionally, essential cell division protein that forms a contractile ring structure (Z ring) at the future cell division site. The regulation of the ring assembly controls the timing and the location of cell division. One of the functions of the FtsZ ring is to recruit other cell division proteins to the septum to produce a new cell wall between the dividing cells. Binds GTP and shows GTPase activity. In Rhizobium meliloti (strain 1021) (Ensifer meliloti), this protein is Cell division protein FtsZ 2.